Here is a 1404-residue protein sequence, read N- to C-terminus: DNA-directed RNA polymerase subunit beta' (1404 aa).

Cys70, Cys72, Cys85, and Cys88 together coordinate Zn(2+). 3 residues coordinate Mg(2+): Asp460, Asp462, and Asp464. Residues Cys825, Cys899, Cys906, and Cys909 each contribute to the Zn(2+) site.

The protein belongs to the RNA polymerase beta' chain family. As to quaternary structure, the RNAP catalytic core consists of 2 alpha, 1 beta, 1 beta' and 1 omega subunit. When a sigma factor is associated with the core the holoenzyme is formed, which can initiate transcription. Mg(2+) serves as cofactor. Zn(2+) is required as a cofactor.

The catalysed reaction is RNA(n) + a ribonucleoside 5'-triphosphate = RNA(n+1) + diphosphate. Its function is as follows. DNA-dependent RNA polymerase catalyzes the transcription of DNA into RNA using the four ribonucleoside triphosphates as substrates. This is DNA-directed RNA polymerase subunit beta' from Nitrosomonas europaea (strain ATCC 19718 / CIP 103999 / KCTC 2705 / NBRC 14298).